A 228-amino-acid polypeptide reads, in one-letter code: Ribulose-phosphate 3-epimerase-like protein 1 (228 aa).

Serine 10 provides a ligand contact to substrate. The a divalent metal cation site is built by histidine 35, aspartate 37, and histidine 70. The active-site Proton acceptor is the aspartate 37. Substrate is bound by residues histidine 70, 146–149, 175–177, and 197–198; these read GFGE, DGG, and GS. Aspartate 175 serves as a coordination point for a divalent metal cation. The active-site Proton donor is the aspartate 175.

The protein belongs to the ribulose-phosphate 3-epimerase family. Homodimer. Requires Fe(2+) as cofactor. Mn(2+) serves as cofactor. It depends on Zn(2+) as a cofactor. Co(2+) is required as a cofactor.

The catalysed reaction is D-ribulose 5-phosphate = D-xylulose 5-phosphate. It functions in the pathway carbohydrate degradation. In terms of biological role, catalyzes the reversible epimerization of D-ribulose 5-phosphate to D-xylulose 5-phosphate. This chain is Ribulose-phosphate 3-epimerase-like protein 1 (RPEL1), found in Homo sapiens (Human).